An 874-amino-acid chain; its full sequence is Alanine--tRNA ligase (874 aa).

Zn(2+)-binding residues include histidine 565, histidine 569, cysteine 666, and histidine 670.

It belongs to the class-II aminoacyl-tRNA synthetase family. It depends on Zn(2+) as a cofactor.

It localises to the cytoplasm. It carries out the reaction tRNA(Ala) + L-alanine + ATP = L-alanyl-tRNA(Ala) + AMP + diphosphate. Its function is as follows. Catalyzes the attachment of alanine to tRNA(Ala) in a two-step reaction: alanine is first activated by ATP to form Ala-AMP and then transferred to the acceptor end of tRNA(Ala). Also edits incorrectly charged Ser-tRNA(Ala) and Gly-tRNA(Ala) via its editing domain. In Polynucleobacter asymbioticus (strain DSM 18221 / CIP 109841 / QLW-P1DMWA-1) (Polynucleobacter necessarius subsp. asymbioticus), this protein is Alanine--tRNA ligase.